Here is a 467-residue protein sequence, read N- to C-terminus: Asparagine--tRNA ligase (467 aa).

The protein belongs to the class-II aminoacyl-tRNA synthetase family. Homodimer.

The protein localises to the cytoplasm. The catalysed reaction is tRNA(Asn) + L-asparagine + ATP = L-asparaginyl-tRNA(Asn) + AMP + diphosphate + H(+). The polypeptide is Asparagine--tRNA ligase (Histophilus somni (strain 2336) (Haemophilus somnus)).